A 251-amino-acid chain; its full sequence is Triosephosphate isomerase (251 aa).

9–11 contributes to the substrate binding site; sequence NWK. The active-site Electrophile is histidine 95. Catalysis depends on glutamate 167, which acts as the Proton acceptor. Substrate contacts are provided by residues glycine 173, serine 213, and 234 to 235; that span reads GG.

It belongs to the triosephosphate isomerase family. As to quaternary structure, homodimer.

The protein localises to the cytoplasm. It carries out the reaction D-glyceraldehyde 3-phosphate = dihydroxyacetone phosphate. It participates in carbohydrate biosynthesis; gluconeogenesis. It functions in the pathway carbohydrate degradation; glycolysis; D-glyceraldehyde 3-phosphate from glycerone phosphate: step 1/1. Its function is as follows. Involved in the gluconeogenesis. Catalyzes stereospecifically the conversion of dihydroxyacetone phosphate (DHAP) to D-glyceraldehyde-3-phosphate (G3P). The sequence is that of Triosephosphate isomerase from Lacticaseibacillus casei (strain BL23) (Lactobacillus casei).